Reading from the N-terminus, the 203-residue chain is Acireductone dioxygenase 3 (203 aa).

Fe(2+)-binding residues include His96, His98, Glu102, and His141. Residues His96, His98, Glu102, and His141 each coordinate Ni(2+).

This sequence belongs to the acireductone dioxygenase (ARD) family. The cofactor is Fe(2+). It depends on Ni(2+) as a cofactor.

It localises to the cytoplasm. It is found in the nucleus. The catalysed reaction is 1,2-dihydroxy-5-(methylsulfanyl)pent-1-en-3-one + O2 = 4-methylsulfanyl-2-oxobutanoate + formate + 2 H(+). It carries out the reaction 1,2-dihydroxy-5-(methylsulfanyl)pent-1-en-3-one + O2 = 3-(methylsulfanyl)propanoate + CO + formate + 2 H(+). It participates in amino-acid biosynthesis; L-methionine biosynthesis via salvage pathway; L-methionine from S-methyl-5-thio-alpha-D-ribose 1-phosphate: step 5/6. Its function is as follows. Catalyzes 2 different reactions between oxygen and the acireductone 1,2-dihydroxy-3-keto-5-methylthiopentene (DHK-MTPene) depending upon the metal bound in the active site. Fe-containing acireductone dioxygenase (Fe-ARD) produces formate and 2-keto-4-methylthiobutyrate (KMTB), the alpha-ketoacid precursor of methionine in the methionine recycle pathway. Ni-containing acireductone dioxygenase (Ni-ARD) produces methylthiopropionate, carbon monoxide and formate, and does not lie on the methionine recycle pathway. In Physcomitrium patens (Spreading-leaved earth moss), this protein is Acireductone dioxygenase 3.